Here is a 142-residue protein sequence, read N- to C-terminus: Large ribosomal subunit protein uL11 (142 aa).

Belongs to the universal ribosomal protein uL11 family. As to quaternary structure, part of the ribosomal stalk of the 50S ribosomal subunit. Interacts with L10 and the large rRNA to form the base of the stalk. L10 forms an elongated spine to which L12 dimers bind in a sequential fashion forming a multimeric L10(L12)X complex. In terms of processing, one or more lysine residues are methylated.

Forms part of the ribosomal stalk which helps the ribosome interact with GTP-bound translation factors. The chain is Large ribosomal subunit protein uL11 from Shewanella baltica (strain OS223).